Reading from the N-terminus, the 376-residue chain is Natterin-2 (376 aa).

Residues 1-18 (MNLSVLLVTLLLLSWTSA) form the signal peptide. Residues 19–27 (EKDLKVRVA) constitute a propeptide that is removed on maturation.

This sequence belongs to the natterin family. Post-translationally, contains 4 disulfide bonds. In terms of tissue distribution, expressed by the venom gland.

The protein resides in the secreted. Inhibited by tissue-kallikrein inhibitor TKI and trasylol. Plasma kallikrein inhibitor PKSI527 and classical inhibitors of serine-, metallo-, thiol- or aspartate-peptidases evokes a minor inhibition of the peptide digestion. In terms of biological role, shows nociceptive, edema-inducing and kininogenase activity with release of kallidin from low molecular weight kininogen. The cleavage occurs at Met-Lys bonds. The protein is Natterin-2 of Thalassophryne nattereri (Copper Joe toadfish).